The primary structure comprises 848 residues: Neuroligin-3 (848 aa).

An N-terminal signal peptide occupies residues 1–37 (MWLQLGLPSLSLSPTPTVGRSLCLILWFLSLVLRAST). Residues 38-709 (QAPAPTVNTH…NPRDYSTELS (672 aa)) lie on the Extracellular side of the membrane. Residue Asn-98 is glycosylated (N-linked (GlcNAc...) asparagine). Cys-106 and Cys-141 are disulfide-bonded. Residues 169-195 (CRKGGSGAKKQGEDLADNDGDEDEDIR) are disordered. The span at 182 to 194 (DLADNDGDEDEDI) shows a compositional bias: acidic residues. 2 disulfides stabilise this stretch: Cys-340–Cys-351 and Cys-510–Cys-544. N-linked (GlcNAc...) asparagine glycosylation occurs at Asn-545. 2 stretches are compositionally biased toward polar residues: residues 645–656 (TKVPPPDTTHSS) and 677–689 (AYSN…SWNG). Positions 645 to 691 (TKVPPPDTTHSSHITRRPNGKTWSTKRPAISPAYSNENAPGSWNGDQ) are disordered. Residues 710–730 (VTIAVGASLLFLNVLAFAALY) form a helical membrane-spanning segment. Residues 731-848 (YRKDKRRQEP…LPNSHSTTRV (118 aa)) lie on the Cytoplasmic side of the membrane. Ser-745 carries the phosphoserine modification. The residue at position 792 (Tyr-792) is a Phosphotyrosine.

The protein belongs to the type-B carboxylesterase/lipase family. As to quaternary structure, homodimer, and heterodimer with NLGN1 and NLGN2. Interacts with neurexins NRXN1, NRXN2 and NRXN3. Interaction with neurexins is mediated by heparan sulfate glycan modification on neurexin. Interacts (via its C-terminus) with DLG4/PSD-95 (via PDZ domain 3). In terms of processing, the N-terminus is blocked. In terms of tissue distribution, detected in brain and on hippocampus neurons, especially at excitatory synapses. Detected in retina (at protein level). Expressed in brain, spinal cord and dorsal root ganglion.

Its subcellular location is the cell membrane. It localises to the synapse. Its function is as follows. Cell surface protein involved in cell-cell-interactions via its interactions with neurexin family members. Plays a role in synapse function and synaptic signal transmission, and probably mediates its effects by recruiting and clustering other synaptic proteins. May promote the initial formation of synapses, but is not essential for this. May also play a role in glia-glia or glia-neuron interactions in the developing peripheral nervous system. This chain is Neuroligin-3 (Nlgn3), found in Rattus norvegicus (Rat).